Here is a 117-residue protein sequence, read N- to C-terminus: Large ribosomal subunit protein bL20c (117 aa).

The protein belongs to the bacterial ribosomal protein bL20 family.

The protein resides in the plastid. It localises to the chloroplast. Its function is as follows. Binds directly to 23S ribosomal RNA and is necessary for the in vitro assembly process of the 50S ribosomal subunit. It is not involved in the protein synthesizing functions of that subunit. The polypeptide is Large ribosomal subunit protein bL20c (Draba nemorosa (Woodland whitlowgrass)).